The sequence spans 509 residues: Methionine--tRNA ligase (509 aa).

Residues 12-22 (YYVNDVPHIGH) carry the 'HIGH' region motif. A 'KMSKS' region motif is present at residues 295-299 (KISKS). K298 provides a ligand contact to ATP.

This sequence belongs to the class-I aminoacyl-tRNA synthetase family. MetG type 2B subfamily. As to quaternary structure, monomer.

It localises to the cytoplasm. It carries out the reaction tRNA(Met) + L-methionine + ATP = L-methionyl-tRNA(Met) + AMP + diphosphate. Its function is as follows. Is required not only for elongation of protein synthesis but also for the initiation of all mRNA translation through initiator tRNA(fMet) aminoacylation. The chain is Methionine--tRNA ligase from Rickettsia bellii (strain RML369-C).